The chain runs to 418 residues: Glutamate dehydrogenase (418 aa).

The active site involves Lys-105. Residue 217 to 223 coordinates NAD(+); that stretch reads GYGNVGY.

The protein belongs to the Glu/Leu/Phe/Val dehydrogenases family. Homohexamer.

Its subcellular location is the cytoplasm. The enzyme catalyses L-glutamate + NAD(+) + H2O = 2-oxoglutarate + NH4(+) + NADH + H(+). It catalyses the reaction L-glutamate + NADP(+) + H2O = 2-oxoglutarate + NH4(+) + NADPH + H(+). The chain is Glutamate dehydrogenase (gdhA) from Aeropyrum pernix (strain ATCC 700893 / DSM 11879 / JCM 9820 / NBRC 100138 / K1).